The chain runs to 580 residues: 2-succinyl-5-enolpyruvyl-6-hydroxy-3-cyclohexene-1-carboxylate synthase (580 aa).

The interval 178–199 (LEPTPMPGDLTEPPAAAQPRDD) is disordered.

It belongs to the TPP enzyme family. MenD subfamily. In terms of assembly, homodimer. Mg(2+) is required as a cofactor. Mn(2+) serves as cofactor. It depends on thiamine diphosphate as a cofactor.

It carries out the reaction isochorismate + 2-oxoglutarate + H(+) = 5-enolpyruvoyl-6-hydroxy-2-succinyl-cyclohex-3-ene-1-carboxylate + CO2. The protein operates within quinol/quinone metabolism; 1,4-dihydroxy-2-naphthoate biosynthesis; 1,4-dihydroxy-2-naphthoate from chorismate: step 2/7. Its pathway is quinol/quinone metabolism; menaquinone biosynthesis. Functionally, catalyzes the thiamine diphosphate-dependent decarboxylation of 2-oxoglutarate and the subsequent addition of the resulting succinic semialdehyde-thiamine pyrophosphate anion to isochorismate to yield 2-succinyl-5-enolpyruvyl-6-hydroxy-3-cyclohexene-1-carboxylate (SEPHCHC). In Roseiflexus castenholzii (strain DSM 13941 / HLO8), this protein is 2-succinyl-5-enolpyruvyl-6-hydroxy-3-cyclohexene-1-carboxylate synthase.